The following is a 61-amino-acid chain: Small ribosomal subunit protein uS14B (61 aa).

Zn(2+)-binding residues include Cys-24, Cys-27, Cys-40, and Cys-43.

Belongs to the universal ribosomal protein uS14 family. Zinc-binding uS14 subfamily. As to quaternary structure, part of the 30S ribosomal subunit. Contacts proteins S3 and S10. Zn(2+) is required as a cofactor.

In terms of biological role, binds 16S rRNA, required for the assembly of 30S particles and may also be responsible for determining the conformation of the 16S rRNA at the A site. This is Small ribosomal subunit protein uS14B from Cutibacterium acnes (strain DSM 16379 / KPA171202) (Propionibacterium acnes).